The primary structure comprises 160 residues: Crossover junction endodeoxyribonuclease RuvC (160 aa).

Active-site residues include D7, E70, and D142. Mg(2+) contacts are provided by D7, E70, and D142.

The protein belongs to the RuvC family. In terms of assembly, homodimer which binds Holliday junction (HJ) DNA. The HJ becomes 2-fold symmetrical on binding to RuvC with unstacked arms; it has a different conformation from HJ DNA in complex with RuvA. In the full resolvosome a probable DNA-RuvA(4)-RuvB(12)-RuvC(2) complex forms which resolves the HJ. It depends on Mg(2+) as a cofactor.

It is found in the cytoplasm. It carries out the reaction Endonucleolytic cleavage at a junction such as a reciprocal single-stranded crossover between two homologous DNA duplexes (Holliday junction).. In terms of biological role, the RuvA-RuvB-RuvC complex processes Holliday junction (HJ) DNA during genetic recombination and DNA repair. Endonuclease that resolves HJ intermediates. Cleaves cruciform DNA by making single-stranded nicks across the HJ at symmetrical positions within the homologous arms, yielding a 5'-phosphate and a 3'-hydroxyl group; requires a central core of homology in the junction. The consensus cleavage sequence is 5'-(A/T)TT(C/G)-3'. Cleavage occurs on the 3'-side of the TT dinucleotide at the point of strand exchange. HJ branch migration catalyzed by RuvA-RuvB allows RuvC to scan DNA until it finds its consensus sequence, where it cleaves and resolves the cruciform DNA. The protein is Crossover junction endodeoxyribonuclease RuvC of Ehrlichia ruminantium (strain Gardel).